Reading from the N-terminus, the 671-residue chain is DNA ligase (671 aa).

Residues 32-36 (DAEYD), 81-82 (SL), and Glu113 contribute to the NAD(+) site. Catalysis depends on Lys115, which acts as the N6-AMP-lysine intermediate. Arg136, Glu173, Lys290, and Lys314 together coordinate NAD(+). Residues Cys408, Cys411, Cys426, and Cys432 each coordinate Zn(2+). One can recognise a BRCT domain in the interval 593–671 (EIDSPFAGKT…EAEMIRLLGA (79 aa)).

Belongs to the NAD-dependent DNA ligase family. LigA subfamily. Mg(2+) serves as cofactor. Requires Mn(2+) as cofactor.

It carries out the reaction NAD(+) + (deoxyribonucleotide)n-3'-hydroxyl + 5'-phospho-(deoxyribonucleotide)m = (deoxyribonucleotide)n+m + AMP + beta-nicotinamide D-nucleotide.. Its function is as follows. DNA ligase that catalyzes the formation of phosphodiester linkages between 5'-phosphoryl and 3'-hydroxyl groups in double-stranded DNA using NAD as a coenzyme and as the energy source for the reaction. It is essential for DNA replication and repair of damaged DNA. This is DNA ligase from Salmonella typhimurium (strain LT2 / SGSC1412 / ATCC 700720).